Consider the following 131-residue polypeptide: Sec-independent protein translocase protein TatB (131 aa).

A helical membrane pass occupies residues 2–22 (FDGIGFMELLLIGVLGLVVLG). The tract at residues 69-131 (NQGLKNLAPE…ENAKSDKPNG (63 aa)) is disordered. Residues 105-123 (AKETPAKETATTETTSTEN) are compositionally biased toward low complexity.

This sequence belongs to the TatB family. In terms of assembly, the Tat system comprises two distinct complexes: a TatABC complex, containing multiple copies of TatA, TatB and TatC subunits, and a separate TatA complex, containing only TatA subunits. Substrates initially bind to the TatABC complex, which probably triggers association of the separate TatA complex to form the active translocon.

It is found in the cell inner membrane. Part of the twin-arginine translocation (Tat) system that transports large folded proteins containing a characteristic twin-arginine motif in their signal peptide across membranes. Together with TatC, TatB is part of a receptor directly interacting with Tat signal peptides. TatB may form an oligomeric binding site that transiently accommodates folded Tat precursor proteins before their translocation. The chain is Sec-independent protein translocase protein TatB from Shewanella piezotolerans (strain WP3 / JCM 13877).